A 453-amino-acid chain; its full sequence is Ribulose bisphosphate carboxylase large chain (453 aa).

Positions 1–2 are excised as a propeptide; sequence MS. Pro3 carries the post-translational modification N-acetylproline. The residue at position 14 (Lys14) is an N6,N6,N6-trimethyllysine. Substrate contacts are provided by Asn123 and Thr173. The Proton acceptor role is filled by Lys175. Position 177 (Lys177) interacts with substrate. 3 residues coordinate Mg(2+): Lys201, Asp203, and Glu204. Lys201 bears the N6-carboxylysine mark. His294 serves as the catalytic Proton acceptor. The substrate site is built by Arg295, His327, and Ser379.

Belongs to the RuBisCO large chain family. Type I subfamily. As to quaternary structure, heterohexadecamer of 8 large chains and 8 small chains; disulfide-linked. The disulfide link is formed within the large subunit homodimers. Mg(2+) serves as cofactor. In terms of processing, the disulfide bond which can form in the large chain dimeric partners within the hexadecamer appears to be associated with oxidative stress and protein turnover.

It localises to the plastid. The protein resides in the chloroplast. The enzyme catalyses 2 (2R)-3-phosphoglycerate + 2 H(+) = D-ribulose 1,5-bisphosphate + CO2 + H2O. It carries out the reaction D-ribulose 1,5-bisphosphate + O2 = 2-phosphoglycolate + (2R)-3-phosphoglycerate + 2 H(+). RuBisCO catalyzes two reactions: the carboxylation of D-ribulose 1,5-bisphosphate, the primary event in carbon dioxide fixation, as well as the oxidative fragmentation of the pentose substrate in the photorespiration process. Both reactions occur simultaneously and in competition at the same active site. The chain is Ribulose bisphosphate carboxylase large chain from Phuopsis stylosa (Caucasian crosswort).